A 78-amino-acid polypeptide reads, in one-letter code: Small ribosomal subunit protein bS18 (78 aa).

This sequence belongs to the bacterial ribosomal protein bS18 family. Part of the 30S ribosomal subunit. Forms a tight heterodimer with protein bS6.

In terms of biological role, binds as a heterodimer with protein bS6 to the central domain of the 16S rRNA, where it helps stabilize the platform of the 30S subunit. In Kineococcus radiotolerans (strain ATCC BAA-149 / DSM 14245 / SRS30216), this protein is Small ribosomal subunit protein bS18.